Here is a 366-residue protein sequence, read N- to C-terminus: Adenosine deaminase (366 aa).

Zn(2+)-binding residues include His-19 and His-21. His-21, Asp-23, and Gly-181 together coordinate substrate. Position 208 (His-208) interacts with Zn(2+). Glu-211 (proton donor) is an active-site residue. Position 304 (Asp-304) interacts with Zn(2+).

It belongs to the metallo-dependent hydrolases superfamily. Adenosine and AMP deaminases family. Adenosine deaminase subfamily. Zn(2+) serves as cofactor.

The catalysed reaction is adenosine + H2O + H(+) = inosine + NH4(+). It carries out the reaction 2'-deoxyadenosine + H2O + H(+) = 2'-deoxyinosine + NH4(+). Its function is as follows. Catalyzes the hydrolytic deamination of adenosine and 2-deoxyadenosine. In Mycobacterium avium (strain 104), this protein is Adenosine deaminase.